Here is a 477-residue protein sequence, read N- to C-terminus: Protoporphyrinogen oxidase (477 aa).

Residues 9-14 (GGGISG), tryptophan 42, 57-60 (GPRG), valine 257, alanine 449, and 454-456 (VAV) each bind FAD.

It belongs to the protoporphyrinogen/coproporphyrinogen oxidase family. Protoporphyrinogen oxidase subfamily. As to quaternary structure, monomer. Homodimer. The cofactor is FAD.

Its subcellular location is the mitochondrion inner membrane. The enzyme catalyses protoporphyrinogen IX + 3 O2 = protoporphyrin IX + 3 H2O2. The protein operates within porphyrin-containing compound metabolism; protoporphyrin-IX biosynthesis; protoporphyrin-IX from protoporphyrinogen-IX: step 1/1. Its activity is regulated as follows. Inhibited by acifluorfen. Catalyzes the 6-electron oxidation of protoporphyrinogen-IX to form protoporphyrin-IX. The polypeptide is Protoporphyrinogen oxidase (Ppox) (Mus musculus (Mouse)).